The primary structure comprises 371 residues: Alanine dehydrogenase (371 aa).

Residues Arg-15 and Lys-74 each coordinate substrate. Catalysis depends on His-95, which acts as the Proton donor/acceptor. NAD(+) is bound by residues Ser-133, 177-178, Asp-197, Ser-219, 238-239, 266-269, Arg-279, and 298-301; these read QA, VL, IAID, and VANM. Asp-269 functions as the Proton donor/acceptor in the catalytic mechanism.

The protein belongs to the AlaDH/PNT family. As to quaternary structure, homohexamer. Trimer of dimer.

The catalysed reaction is L-alanine + NAD(+) + H2O = pyruvate + NH4(+) + NADH + H(+). Its pathway is amino-acid degradation; L-alanine degradation via dehydrogenase pathway; NH(3) and pyruvate from L-alanine: step 1/1. Catalyzes the reversible reductive amination of pyruvate to L-alanine. May play a role in cell wall synthesis as L-alanine is an important constituent of the peptidoglycan layer. The polypeptide is Alanine dehydrogenase (ald) (Staphylococcus saprophyticus subsp. saprophyticus (strain ATCC 15305 / DSM 20229 / NCIMB 8711 / NCTC 7292 / S-41)).